The sequence spans 338 residues: Glycerol-3-phosphate dehydrogenase [NAD(P)+] (338 aa).

Residues serine 14, tyrosine 15, histidine 35, and lysine 109 each coordinate NADPH. Sn-glycerol 3-phosphate contacts are provided by lysine 109, glycine 138, and threonine 140. Residue alanine 142 coordinates NADPH. 5 residues coordinate sn-glycerol 3-phosphate: lysine 194, aspartate 247, serine 257, arginine 258, and asparagine 259. Lysine 194 acts as the Proton acceptor in catalysis. An NADPH-binding site is contributed by arginine 258. NADPH is bound by residues valine 282 and glutamate 284.

Belongs to the NAD-dependent glycerol-3-phosphate dehydrogenase family.

The protein resides in the cytoplasm. The catalysed reaction is sn-glycerol 3-phosphate + NAD(+) = dihydroxyacetone phosphate + NADH + H(+). It catalyses the reaction sn-glycerol 3-phosphate + NADP(+) = dihydroxyacetone phosphate + NADPH + H(+). It functions in the pathway membrane lipid metabolism; glycerophospholipid metabolism. Catalyzes the reduction of the glycolytic intermediate dihydroxyacetone phosphate (DHAP) to sn-glycerol 3-phosphate (G3P), the key precursor for phospholipid synthesis. The polypeptide is Glycerol-3-phosphate dehydrogenase [NAD(P)+] (Sodalis glossinidius (strain morsitans)).